The following is a 204-amino-acid chain: Prephenate decarboxylase (204 aa).

It belongs to the prephenate decarboxylase family.

Its subcellular location is the cytoplasm. The enzyme catalyses prephenate + H(+) = 3-[(4R)-4-hydroxycyclohexa-1,5-dien-1-yl]-2-oxopropanoate + CO2. Its pathway is antibiotic biosynthesis; bacilysin biosynthesis. Its function is as follows. Part of the bacABCDEF operon responsible for the biosynthesis of the nonribosomally synthesized dipeptide antibiotic bacilysin, composed of L-alanine and L-anticapsin. Bacilysin is an irreversible inactivator of the glutaminase domain of glucosamine synthetase. BacA is an unusual prephenate decarboxylase that avoids the typical aromatization of the cyclohexadienol ring of prephenate. BacA catalyzes the protonation of prephenate (1-carboxy-4-hydroxy-alpha-oxo-2,5-cyclohexadiene-1-propanoic acid) at C6 position, followed by a decarboxylation to produce the endocyclic-delta(4),delta(8)-7R-dihydro-hydroxyphenylpyruvate (en-H2HPP). En-H2HPP is able to undergo a slow nonenzymatic isomerization to produce the exocyclic-delta(3),delta(5)-dihydro-hydroxyphenylpyruvate (ex-H2HPP). BacA isomerizes only the pro-R double bond in prephenate. This Bacillus subtilis (strain 168) protein is Prephenate decarboxylase.